Here is a 408-residue protein sequence, read N- to C-terminus: Multifunctional CCA protein (408 aa).

ATP-binding residues include Gly-8 and Arg-11. CTP is bound by residues Gly-8 and Arg-11. Asp-21 and Asp-23 together coordinate Mg(2+). ATP-binding residues include Arg-91, Arg-137, and Arg-140. Positions 91, 137, and 140 each coordinate CTP. Positions Ser-228–Trp-329 constitute an HD domain.

The protein belongs to the tRNA nucleotidyltransferase/poly(A) polymerase family. Bacterial CCA-adding enzyme type 1 subfamily. Monomer. Can also form homodimers and oligomers. It depends on Mg(2+) as a cofactor. Ni(2+) is required as a cofactor.

It catalyses the reaction a tRNA precursor + 2 CTP + ATP = a tRNA with a 3' CCA end + 3 diphosphate. The catalysed reaction is a tRNA with a 3' CCA end + 2 CTP + ATP = a tRNA with a 3' CCACCA end + 3 diphosphate. Its function is as follows. Catalyzes the addition and repair of the essential 3'-terminal CCA sequence in tRNAs without using a nucleic acid template. Adds these three nucleotides in the order of C, C, and A to the tRNA nucleotide-73, using CTP and ATP as substrates and producing inorganic pyrophosphate. tRNA 3'-terminal CCA addition is required both for tRNA processing and repair. Also involved in tRNA surveillance by mediating tandem CCA addition to generate a CCACCA at the 3' terminus of unstable tRNAs. While stable tRNAs receive only 3'-terminal CCA, unstable tRNAs are marked with CCACCA and rapidly degraded. This chain is Multifunctional CCA protein, found in Shewanella piezotolerans (strain WP3 / JCM 13877).